Consider the following 1130-residue polypeptide: ABC transporter ATM1 (1130 aa).

A mitochondrion-targeting transit peptide spans Met1 to Leu65. 3 disordered regions span residues Asp191–Pro212, His276–Ser315, and Ser341–Pro385. Polar residues-rich tracts occupy residues Ser195–Ala206 and Gly305–Ser315. The helical transmembrane segment at Pro406–Leu426 threads the bilayer. A compositionally biased stretch (low complexity) spans Pro468–Glu502. The tract at residues Pro468–Gly554 is disordered. The span at Gly503 to Ser523 shows a compositional bias: basic and acidic residues. Transmembrane regions (helical) follow at residues Ile574–Gly594, Val653–Gly673, Gly678–Val698, Leu761–Ala781, and Leu791–Leu811. The region spanning Val587–Leu823 is the ABC transmembrane type-1 domain. In terms of domain architecture, ABC transporter spans Val857–Glu1111. Residue Gly910–Ser917 coordinates ATP.

Belongs to the ABC transporter superfamily. ABCB family. Heavy Metal importer (TC 3.A.1.210) subfamily. In terms of assembly, homodimer.

The protein localises to the mitochondrion membrane. Its function is as follows. Probably transports iron-sulfur clusters in an ATP-dependent manner. Plays a role in [Fe-S] proteins homeostasis. Required for optimal parasite growth and lytic cycle. This chain is ABC transporter ATM1, found in Toxoplasma gondii (strain ATCC 50611 / Me49).